Here is a 299-residue protein sequence, read N- to C-terminus: 4-diphosphocytidyl-2-C-methyl-D-erythritol kinase (299 aa).

Residue Lys-11 is part of the active site. 94 to 104 is a binding site for ATP; the sequence is PQGGGLGGGSS. The active site involves Asp-136.

The protein belongs to the GHMP kinase family. IspE subfamily.

It carries out the reaction 4-CDP-2-C-methyl-D-erythritol + ATP = 4-CDP-2-C-methyl-D-erythritol 2-phosphate + ADP + H(+). Its pathway is isoprenoid biosynthesis; isopentenyl diphosphate biosynthesis via DXP pathway; isopentenyl diphosphate from 1-deoxy-D-xylulose 5-phosphate: step 3/6. Functionally, catalyzes the phosphorylation of the position 2 hydroxy group of 4-diphosphocytidyl-2C-methyl-D-erythritol. The chain is 4-diphosphocytidyl-2-C-methyl-D-erythritol kinase from Bordetella bronchiseptica (strain ATCC BAA-588 / NCTC 13252 / RB50) (Alcaligenes bronchisepticus).